The sequence spans 172 residues: Xanthine-guanine phosphoribosyltransferase (172 aa).

5-phospho-alpha-D-ribose 1-diphosphate-binding positions include 47–48 (RG) and 106–114 (DDLVDTGKT). Residue aspartate 107 coordinates Mg(2+). Guanine contacts are provided by aspartate 110 and isoleucine 153. Residues aspartate 110 and isoleucine 153 each contribute to the xanthine site. GMP is bound by residues 110-114 (DTGKT) and 152-153 (WI).

The protein belongs to the purine/pyrimidine phosphoribosyltransferase family. XGPT subfamily. As to quaternary structure, homotetramer. Mg(2+) serves as cofactor.

Its subcellular location is the cell inner membrane. The enzyme catalyses GMP + diphosphate = guanine + 5-phospho-alpha-D-ribose 1-diphosphate. It catalyses the reaction XMP + diphosphate = xanthine + 5-phospho-alpha-D-ribose 1-diphosphate. It carries out the reaction IMP + diphosphate = hypoxanthine + 5-phospho-alpha-D-ribose 1-diphosphate. It functions in the pathway purine metabolism; GMP biosynthesis via salvage pathway; GMP from guanine: step 1/1. Its pathway is purine metabolism; XMP biosynthesis via salvage pathway; XMP from xanthine: step 1/1. Its function is as follows. Purine salvage pathway enzyme that catalyzes the transfer of the ribosyl-5-phosphate group from 5-phospho-alpha-D-ribose 1-diphosphate (PRPP) to the N9 position of the 6-oxopurines guanine and xanthine to form the corresponding ribonucleotides GMP (guanosine 5'-monophosphate) and XMP (xanthosine 5'-monophosphate), with the release of PPi. To a lesser extent, also acts on hypoxanthine. This Rhodopseudomonas palustris (strain BisB5) protein is Xanthine-guanine phosphoribosyltransferase.